A 295-amino-acid polypeptide reads, in one-letter code: Glutamyl-Q tRNA(Asp) synthetase (295 aa).

L-glutamate contacts are provided by residues 5–9 (RFAPS) and Glu41. The 'HIGH' region signature appears at 8-18 (PSPTGLLHIGS). Residues Cys97, Cys99, Tyr117, and Cys121 each contribute to the Zn(2+) site. The L-glutamate site is built by Tyr178 and Arg196. Positions 234–238 (KWSKQ) match the 'KMSKS' region motif. An ATP-binding site is contributed by Lys237.

It belongs to the class-I aminoacyl-tRNA synthetase family. GluQ subfamily. The cofactor is Zn(2+).

Its function is as follows. Catalyzes the tRNA-independent activation of glutamate in presence of ATP and the subsequent transfer of glutamate onto a tRNA(Asp). Glutamate is transferred on the 2-amino-5-(4,5-dihydroxy-2-cyclopenten-1-yl) moiety of the queuosine in the wobble position of the QUC anticodon. In Neisseria gonorrhoeae (strain ATCC 700825 / FA 1090), this protein is Glutamyl-Q tRNA(Asp) synthetase.